The chain runs to 280 residues: Diaminopimelate epimerase (280 aa).

Asn-11 and Asn-64 together coordinate substrate. Catalysis depends on Cys-73, which acts as the Proton donor. Substrate is bound by residues 74–75, Asn-162, Asn-195, and 213–214; these read GN and ER. Catalysis depends on Cys-222, which acts as the Proton acceptor. 223–224 provides a ligand contact to substrate; sequence GT.

It belongs to the diaminopimelate epimerase family. In terms of assembly, homodimer.

It is found in the cytoplasm. The catalysed reaction is (2S,6S)-2,6-diaminopimelate = meso-2,6-diaminopimelate. It participates in amino-acid biosynthesis; L-lysine biosynthesis via DAP pathway; DL-2,6-diaminopimelate from LL-2,6-diaminopimelate: step 1/1. Catalyzes the stereoinversion of LL-2,6-diaminopimelate (L,L-DAP) to meso-diaminopimelate (meso-DAP), a precursor of L-lysine and an essential component of the bacterial peptidoglycan. The polypeptide is Diaminopimelate epimerase (Pelotomaculum thermopropionicum (strain DSM 13744 / JCM 10971 / SI)).